A 425-amino-acid chain; its full sequence is Potassium/proton antiporter CemA (425 aa).

The chain crosses the membrane as a helical span at residues 89 to 109 (LFLTTVKCLFILLFVPLGINF). The tract at residues 159-278 (LSENQIFFGL…KTDFASVFRT (120 aa)) is insert. The disordered stretch occupies residues 173–192 (STFPSSEKSQKSEHFSNQDE). The segment covering 180–192 (KSQKSEHFSNQDE) has biased composition (basic and acidic residues). Helical transmembrane passes span 300 to 320 (IEAI…CYLL), 350 to 370 (ILFI…ELFF), and 386 to 406 (IFLL…YLIF).

Belongs to the CemA family.

Its subcellular location is the plastid. The protein localises to the chloroplast inner membrane. It carries out the reaction K(+)(in) + H(+)(out) = K(+)(out) + H(+)(in). In terms of biological role, contributes to K(+)/H(+) antiport activity by supporting proton efflux to control proton extrusion and homeostasis in chloroplasts in a light-dependent manner to modulate photosynthesis. Prevents excessive induction of non-photochemical quenching (NPQ) under continuous-light conditions. Indirectly promotes efficient inorganic carbon uptake into chloroplasts. The protein is Potassium/proton antiporter CemA of Tetradesmus obliquus (Green alga).